The sequence spans 127 residues: Fluoride-specific ion channel FluC (127 aa).

Helical transmembrane passes span 4–24, 35–55, 71–91, and 103–123; these read LLLA…LLSM, LGTL…FAWF, TGFC…VFLL, and VFVN…LFSA. Na(+)-binding residues include G75 and T78.

It belongs to the fluoride channel Fluc/FEX (TC 1.A.43) family.

The protein localises to the cell inner membrane. It carries out the reaction fluoride(in) = fluoride(out). Na(+) is not transported, but it plays an essential structural role and its presence is essential for fluoride channel function. In terms of biological role, fluoride-specific ion channel. Important for reducing fluoride concentration in the cell, thus reducing its toxicity. The chain is Fluoride-specific ion channel FluC from Escherichia coli O8 (strain IAI1).